We begin with the raw amino-acid sequence, 445 residues long: 3-phosphoshikimate 1-carboxyvinyltransferase (445 aa).

Residues lysine 21, serine 22, and arginine 26 each contribute to the 3-phosphoshikimate site. A phosphoenolpyruvate-binding site is contributed by lysine 21. Residues glycine 92 and arginine 120 each contribute to the phosphoenolpyruvate site. Positions 165, 166, 307, and 334 each coordinate 3-phosphoshikimate. Glutamine 166 lines the phosphoenolpyruvate pocket. Aspartate 307 serves as the catalytic Proton acceptor. Phosphoenolpyruvate is bound by residues arginine 338, arginine 379, and lysine 405.

It belongs to the EPSP synthase family. Monomer.

The protein localises to the cytoplasm. The enzyme catalyses 3-phosphoshikimate + phosphoenolpyruvate = 5-O-(1-carboxyvinyl)-3-phosphoshikimate + phosphate. Its pathway is metabolic intermediate biosynthesis; chorismate biosynthesis; chorismate from D-erythrose 4-phosphate and phosphoenolpyruvate: step 6/7. Its function is as follows. Catalyzes the transfer of the enolpyruvyl moiety of phosphoenolpyruvate (PEP) to the 5-hydroxyl of shikimate-3-phosphate (S3P) to produce enolpyruvyl shikimate-3-phosphate and inorganic phosphate. The polypeptide is 3-phosphoshikimate 1-carboxyvinyltransferase (Chlamydia felis (strain Fe/C-56) (Chlamydophila felis)).